A 300-amino-acid chain; its full sequence is Ankyrin repeat domain-containing protein 54 (300 aa).

Residues 1–27 are disordered; sequence MAAAAGDADDEPRSGHSSSEGECAVAP. The residue at position 2 (alanine 2) is an N-acetylalanine. 2 positions are modified to phosphoserine: serine 58 and serine 63. Positions 99–117 match the Nuclear localization signal (NLS) motif; the sequence is RRLGPTGKEVHALKRLRDS. ANK repeat units follow at residues 109–138, 142–171, 175–204, and 208–244; these read HALKRLRDSANANDVETVQQLLEDGADPCA, KGRTALHFASCNGNDQIVQLLLDHGADPNQ, LGNTPLHLAACTNHVPVITTLLRGGARVDA, and AGRTPLHLAKSKLNILQEGHAQCLEAVRLEVKQIIHM. The LYN-binding stretch occupies residues 141-241; that stretch reads DKGRTALHFA…EAVRLEVKQI (101 aa). The Nuclear export signal (NES) motif lies at 283 to 293; that stretch reads LLASFTSLSLQ.

Interacts (via ankyrin repeat region) with LYN (via SH3-domain) in an activation-independent status of LYN. Forms a multiprotein complex with LYN and HCLS1. Interacts with TSN2, VAV1, DBNL and LASP1.

The protein resides in the nucleus. The protein localises to the cytoplasm. It is found in the midbody. Its function is as follows. Plays an important role in regulating intracellular signaling events associated with erythroid terminal differentiation. This chain is Ankyrin repeat domain-containing protein 54 (ANKRD54), found in Homo sapiens (Human).